The chain runs to 312 residues: tRNA uridine(34) hydroxylase (312 aa).

The 96-residue stretch at 130–225 folds into the Rhodanese domain; it reads RGDEVVFFDG…YGEKFGNQGL (96 aa). Catalysis depends on cysteine 185, which acts as the Cysteine persulfide intermediate.

It belongs to the TrhO family.

It carries out the reaction uridine(34) in tRNA + AH2 + O2 = 5-hydroxyuridine(34) in tRNA + A + H2O. Functionally, catalyzes oxygen-dependent 5-hydroxyuridine (ho5U) modification at position 34 in tRNAs. The protein is tRNA uridine(34) hydroxylase of Corynebacterium efficiens (strain DSM 44549 / YS-314 / AJ 12310 / JCM 11189 / NBRC 100395).